Consider the following 621-residue polypeptide: Cyclic nucleotide-gated ion channel 11 (621 aa).

Residues 1–43 lie on the Cytoplasmic side of the membrane; that stretch reads MNLQRRKFVRLDSTGVDGKLKSVRGRLKKVYGKMKTLENWRKT. Residues 44 to 64 traverse the membrane as a helical segment; sequence VLLACVVALAIDPLFLFIPLI. Topologically, residues 65–76 are extracellular; sequence DSQRFCFTFDKT. The chain crosses the membrane as a helical span at residues 77–97; sequence LVAVVCVIRTFIDTFYVIHII. At 98 to 128 the chain is on the cytoplasmic side; the sequence is YYLITETIAPRSQASLRGEIVVHSKATLKTR. The helical transmembrane segment at 129–149 threads the bilayer; the sequence is LLFHFIVDIISVLPIPQVVVL. Residues 150-162 are Extracellular-facing; it reads TLIPLSASLVSER. Residues 163-183 traverse the membrane as a helical segment; sequence ILKWIILSQYVPRIIRMYPLY. Topologically, residues 184-198 are cytoplasmic; it reads KEVTRAFGTVAESKR. Residues 199–219 traverse the membrane as a helical segment; sequence VGAALNFFLYMLHSYVCGAFW. Over 220–329 the chain is Extracellular; it reads YLSSIERKST…QNLETSNSAG (110 aa). Residues 330–350 traverse the membrane as a helical segment; it reads EIFFAIIICVSGLLLFAVLIG. At 351–621 the chain is on the cytoplasmic side; sequence NVQKYLQSST…KLNLGAAIYA (271 aa). Residues 435 to 556 and aspartate 506 each bind a nucleoside 3',5'-cyclic phosphate; that span reads LLQA…HSKQ. Residues 549–564 are calmodulin-binding; sequence YRRLHSKQLQHMFRFY. In terms of domain architecture, IQ spans 569–598; that stretch reads QTWAACFIQAAWKRHCRRKLSKALREEEGK.

It belongs to the cyclic nucleotide-gated cation channel (TC 1.A.1.5) family. As to quaternary structure, homotetramer or heterotetramer.

The protein resides in the cell membrane. Functionally, putative cyclic nucleotide-gated ion channel. This is Cyclic nucleotide-gated ion channel 11 (CNGC11) from Arabidopsis thaliana (Mouse-ear cress).